Reading from the N-terminus, the 319-residue chain is Ferrochelatase (319 aa).

The Fe cation site is built by H194 and E275.

This sequence belongs to the ferrochelatase family.

Its subcellular location is the cytoplasm. The enzyme catalyses heme b + 2 H(+) = protoporphyrin IX + Fe(2+). It participates in porphyrin-containing compound metabolism; protoheme biosynthesis; protoheme from protoporphyrin-IX: step 1/1. Functionally, catalyzes the ferrous insertion into protoporphyrin IX. This is Ferrochelatase from Vibrio vulnificus (strain YJ016).